Consider the following 218-residue polypeptide: Glutathione S-transferase Mu 1 (218 aa).

Positions 2 to 88 (PMILGYWDIR…YIARKHNLCG (87 aa)) constitute a GST N-terminal domain. Glutathione is bound at residue 7–8 (YW). A Phosphothreonine modification is found at Thr34. Glutathione contacts are provided by residues 43–46 (RSQW), Lys50, 59–60 (NL), and 72–73 (QS). A GST C-terminal domain is found at 90 to 208 (TEEEKIRVDI…KSSRFLPRPV (119 aa)). Tyr116 provides a ligand contact to substrate. Ser210 carries the phosphoserine modification.

This sequence belongs to the GST superfamily. Mu family. In terms of assembly, homodimer. As to expression, liver (at protein level).

It is found in the cytoplasm. It carries out the reaction RX + glutathione = an S-substituted glutathione + a halide anion + H(+). The catalysed reaction is prostaglandin A2 + glutathione = prostaglandin A2-S-(R)-glutathione. It catalyses the reaction prostaglandin J2 + glutathione = prostaglandin J2-S-(R)-glutathione. The enzyme catalyses prostaglandin J2 + glutathione = prostaglandin J2-S-(S)-glutathione. It carries out the reaction prostaglandin A2 + glutathione = prostaglandin A2-S-(S)-glutathione. The catalysed reaction is 11(S)-hydroxy-14(S),15(S)-epoxy-(5Z,8Z,12E)-eicosatrienoate + glutathione = (11S,15S)-dihydroxy-14(R)-S-glutathionyl-(5Z,8Z,12E)-eicosatrienoate. In terms of biological role, conjugation of reduced glutathione to a wide number of exogenous and endogenous hydrophobic electrophiles. Involved in the formation of glutathione conjugates of both prostaglandin A2 (PGA2) and prostaglandin J2 (PGJ2). Participates in the formation of novel hepoxilin regioisomers. This is Glutathione S-transferase Mu 1 from Homo sapiens (Human).